The primary structure comprises 122 residues: Ribonuclease P protein component 1 (122 aa).

The protein belongs to the eukaryotic/archaeal RNase P protein component 1 family. As to quaternary structure, consists of a catalytic RNA component and at least 4-5 protein subunits.

It is found in the cytoplasm. The catalysed reaction is Endonucleolytic cleavage of RNA, removing 5'-extranucleotides from tRNA precursor.. In terms of biological role, part of ribonuclease P, a protein complex that generates mature tRNA molecules by cleaving their 5'-ends. The polypeptide is Ribonuclease P protein component 1 (Thermococcus sibiricus (strain DSM 12597 / MM 739)).